The sequence spans 521 residues: Myocyte-specific enhancer factor 2D (521 aa).

Residues 3-57 (RKKIQIQRITDERNRQVTFTKRKFGLMKKAYELSVLCDCEIALIIFNHSNKLFQY) form the MADS-box domain. The segment at residues 58 to 86 (ASTDMDKVLLKYTEYNEPHESRTNADIIE) is a DNA-binding region (mef2-type). Residues S98, S106, and S110 each carry the phosphoserine modification. Phosphoserine; by PKA is present on S121. A disordered region spans residues 174–207 (TDPRLLSPQQPALQRNSVSPGLPQRPASAGAMLG). A Phosphoserine; by MAPK7 modification is found at S180. Polar residues predominate over residues 180-192 (SPQQPALQRNSVS). The residue at position 190 (S190) is a Phosphoserine; by PKA. S231 carries the phosphoserine modification. Residues 244–266 (NKVIPAKSPPPPTHSTQLGAPSR) are disordered. K245 bears the N6-acetyllysine mark. S251 carries the post-translational modification Phosphoserine. Positions 286–292 (TEDHLDL) are beta domain. 2 disordered regions span residues 357–407 (SLGN…QSHL) and 437–521 (SIKS…WTLK). The segment covering 373–400 (PQQPQPPQQQPPQPQQPQPQQPQQPQQP) has biased composition (pro residues). N6-acetyllysine; alternate is present on K439. Residue K439 forms a Glycyl lysine isopeptide (Lys-Gly) (interchain with G-Cter in SUMO); alternate linkage. Phosphoserine is present on S444.

The protein belongs to the MEF2 family. As to quaternary structure, interacts with MYOG. Forms a complex with class II HDACs in undifferentiating cells. On myogenic differentiation, HDACs are released into the cytoplasm allowing MEF2s to interact with other proteins for activation. Interacts with HDAC4 (in undifferentiating cells); the interaction translocates MEF2D to nuclear dots. Forms a heterodimer with MEF2A. Interacts with MAPK7; the interaction phosphorylates but does not activate MEF2D. Interacts with CCAR2 and HDAC3. Post-translationally, phosphorylated on Ser-444 by CDK5 is required for Lys-439 sumoylation and inhibits transcriptional activity. In neurons, enhanced CDK5 activity induced by neurotoxins promotes caspase 3-mediated cleavage leading to neuron apoptosis. Phosphorylation on Ser-180 can be enhanced by EGF. Phosphorylated and activated by CaMK4. Acetylated on Lys-439 by CREBBP. Acetylated by EP300. Deacetylated by SIRT1 and HDAC3. In terms of processing, sumoylated on Lys-439 with SUMO2 but not SUMO1; which inhibits transcriptional activity and myogenic activity. Desumoylated by SENP3. Post-translationally, proteolytically cleaved in cerebellar granule neurons on several sites by caspase 7 following neurotoxicity. Preferentially cleaves the CDK5-mediated hyperphosphorylated form which leads to neuron apoptosis and transcriptional inactivation.

The protein resides in the nucleus. Functionally, transcriptional activator which binds specifically to the MEF2 element, 5'-YTA[AT](4)TAR-3', found in numerous muscle-specific, growth factor- and stress-induced genes. Mediates cellular functions not only in skeletal and cardiac muscle development, but also in neuronal differentiation and survival. Plays diverse roles in the control of cell growth, survival and apoptosis via p38 MAPK signaling in muscle-specific and/or growth factor-related transcription. Plays a critical role in the regulation of neuronal apoptosis. The chain is Myocyte-specific enhancer factor 2D (MEF2D) from Homo sapiens (Human).